Reading from the N-terminus, the 350-residue chain is Guanine nucleotide-binding protein G(t) subunit alpha-1 (350 aa).

A disordered region spans residues 1 to 21; the sequence is MGAGASAEEKHSRELEKKLKE. The N-myristoyl glycine moiety is linked to residue Gly2. The span at 7 to 21 shows a compositional bias: basic and acidic residues; sequence AEEKHSRELEKKLKE. In terms of domain architecture, G-alpha spans 28–350; the sequence is RTVKLLLLGA…KENLKDCGLF (323 aa). Residues 31-44 are G1 motif; sequence KLLLLGAGESGKST. Position 36–43 (36–43) interacts with GTP; sequence GAGESGKS. Ser43 lines the Mg(2+) pocket. A Phosphotyrosine modification is found at Tyr142. Residues Asp146, 171–177, Gly199, 265–268, and Ala322 contribute to the GTP site; these read LRSRVKT and NKKD. Residues 169-177 are G2 motif; that stretch reads DVLRSRVKT. A Mg(2+)-binding site is contributed by Thr177. The tract at residues 192–201 is G3 motif; it reads FRMFDVGGQR. The G4 motif stretch occupies residues 261–268; sequence VLFLNKKD. Positions 320-325 are G5 motif; the sequence is TCATDT. Positions 340–350 are interaction with RHO; it reads IKENLKDCGLF.

Belongs to the G-alpha family. G(i/o/t/z) subfamily. Heterotrimeric G proteins are composed of 3 subunits alpha, beta and gamma. The alpha chain contains the guanine nucleotide binding site. Interacts with RHO. Interacts with RGS9 and PDE6G. Interacts (when myristoylated) with UNC119; interaction is required for localization in sensory neurons. In the retina, expressed in the rod photoreceptors.

The protein resides in the cell projection. It localises to the cilium. It is found in the photoreceptor outer segment. The protein localises to the membrane. Its subcellular location is the photoreceptor inner segment. Its function is as follows. Functions as a signal transducer for the rod photoreceptor RHO. Required for normal RHO-mediated light perception by the retina. Guanine nucleotide-binding proteins (G proteins) function as transducers downstream of G protein-coupled receptors (GPCRs), such as the photoreceptor RHO. The alpha chain contains the guanine nucleotide binding site and alternates between an active, GTP-bound state and an inactive, GDP-bound state. Activated RHO promotes GDP release and GTP binding. Signaling is mediated via downstream effector proteins, such as cGMP-phosphodiesterase. The protein is Guanine nucleotide-binding protein G(t) subunit alpha-1 (Gnat1) of Mus musculus (Mouse).